The chain runs to 86 residues: Myosuppressin (86 aa).

Positions 1 to 18 (MAIFCNNVLAALPTQCNP) are cleaved as a signal peptide. Residues 19 to 70 (GFLDDLPPRIRKVCVALSRIYELGSEMESYIGDKENHITGFHESIPLLDSGV) constitute a propeptide that is removed on maturation. A Pyrrolidone carboxylic acid modification is found at Gln73. A Phenylalanine amide modification is found at Phe82.

It localises to the secreted. In terms of biological role, myoinhibiting neuropeptide. The protein is Myosuppressin of Apis mellifera (Honeybee).